A 433-amino-acid polypeptide reads, in one-letter code: Phosphomethylpyrimidine synthase (433 aa).

Substrate-binding positions include Asn66, Met94, Tyr123, His162, 184 to 186, 225 to 228, and Glu264; these read SRG and DALR. Position 268 (His268) interacts with Zn(2+). Tyr291 is a substrate binding site. Residue His332 participates in Zn(2+) binding. The [4Fe-4S] cluster site is built by Cys408, Cys411, and Cys415.

The protein belongs to the ThiC family. [4Fe-4S] cluster serves as cofactor.

The enzyme catalyses 5-amino-1-(5-phospho-beta-D-ribosyl)imidazole + S-adenosyl-L-methionine = 4-amino-2-methyl-5-(phosphooxymethyl)pyrimidine + CO + 5'-deoxyadenosine + formate + L-methionine + 3 H(+). The protein operates within cofactor biosynthesis; thiamine diphosphate biosynthesis. Its function is as follows. Catalyzes the synthesis of the hydroxymethylpyrimidine phosphate (HMP-P) moiety of thiamine from aminoimidazole ribotide (AIR) in a radical S-adenosyl-L-methionine (SAM)-dependent reaction. The sequence is that of Phosphomethylpyrimidine synthase from Saccharolobus islandicus (strain M.16.27) (Sulfolobus islandicus).